The following is a 98-amino-acid chain: Cell division protein FtsB (98 aa).

The Cytoplasmic portion of the chain corresponds to 1 to 3 (MKR). A helical membrane pass occupies residues 4 to 21 (LLFVLIALLAMLQYRLWL). Over 22–98 (GDKSLADSFH…GGERGGVPEN (77 aa)) the chain is Periplasmic. The stretch at 31 to 74 (HLQEQIKLQQQSNAQLVARNQVLREEISDLRSGTEALEERARNE) forms a coiled coil.

This sequence belongs to the FtsB family. In terms of assembly, part of a complex composed of FtsB, FtsL and FtsQ.

The protein resides in the cell inner membrane. Essential cell division protein. May link together the upstream cell division proteins, which are predominantly cytoplasmic, with the downstream cell division proteins, which are predominantly periplasmic. The sequence is that of Cell division protein FtsB from Shewanella pealeana (strain ATCC 700345 / ANG-SQ1).